We begin with the raw amino-acid sequence, 319 residues long: tRNA U34 carboxymethyltransferase (319 aa).

Carboxy-S-adenosyl-L-methionine is bound by residues lysine 88, tryptophan 102, lysine 107, glycine 126, 176–177, methionine 192, tyrosine 196, and arginine 311; that span reads LE.

The protein belongs to the class I-like SAM-binding methyltransferase superfamily. CmoB family. In terms of assembly, homotetramer.

It carries out the reaction carboxy-S-adenosyl-L-methionine + 5-hydroxyuridine(34) in tRNA = 5-carboxymethoxyuridine(34) in tRNA + S-adenosyl-L-homocysteine + H(+). In terms of biological role, catalyzes carboxymethyl transfer from carboxy-S-adenosyl-L-methionine (Cx-SAM) to 5-hydroxyuridine (ho5U) to form 5-carboxymethoxyuridine (cmo5U) at position 34 in tRNAs. The protein is tRNA U34 carboxymethyltransferase of Pseudomonas savastanoi pv. phaseolicola (strain 1448A / Race 6) (Pseudomonas syringae pv. phaseolicola (strain 1448A / Race 6)).